The primary structure comprises 154 residues: MKILGIDPGTRNCGYAIVEKNGRDLKLIEAGLIKIKTKILQEQIVEMTEGLDLLFKNHKIDQVSIEDMFYAFNPKTVIKLAQFRGAISLKILQEFGNFSEYTPLQVKQAVTGNGKATKEQVAFMVKRLLNVKKEIKPLDITDAIAIALTHAQRL.

Residues Asp-7, Glu-66, and Asp-139 contribute to the active site. Residues Asp-7, Glu-66, and Asp-139 each coordinate Mg(2+).

The protein belongs to the RuvC family. As to quaternary structure, homodimer which binds Holliday junction (HJ) DNA. The HJ becomes 2-fold symmetrical on binding to RuvC with unstacked arms; it has a different conformation from HJ DNA in complex with RuvA. In the full resolvosome a probable DNA-RuvA(4)-RuvB(12)-RuvC(2) complex forms which resolves the HJ. The cofactor is Mg(2+).

It is found in the cytoplasm. It catalyses the reaction Endonucleolytic cleavage at a junction such as a reciprocal single-stranded crossover between two homologous DNA duplexes (Holliday junction).. Functionally, the RuvA-RuvB-RuvC complex processes Holliday junction (HJ) DNA during genetic recombination and DNA repair. Endonuclease that resolves HJ intermediates. Cleaves cruciform DNA by making single-stranded nicks across the HJ at symmetrical positions within the homologous arms, yielding a 5'-phosphate and a 3'-hydroxyl group; requires a central core of homology in the junction. The consensus cleavage sequence is 5'-(A/T)TT(C/G)-3'. Cleavage occurs on the 3'-side of the TT dinucleotide at the point of strand exchange. HJ branch migration catalyzed by RuvA-RuvB allows RuvC to scan DNA until it finds its consensus sequence, where it cleaves and resolves the cruciform DNA. The protein is Crossover junction endodeoxyribonuclease RuvC of Aliarcobacter butzleri (strain RM4018) (Arcobacter butzleri).